A 174-amino-acid polypeptide reads, in one-letter code: Gamma-crystallin S (174 aa).

Beta/gamma crystallin 'Greek key' domains follow at residues 2–40 (GRII…RVES) and 41–83 (GAWV…KMIH). The interval 84-89 (FVSGSE) is connecting peptide. Beta/gamma crystallin 'Greek key' domains follow at residues 90 to 130 (YKIQ…KVLD) and 131 to 173 (GIWI…KRLM).

Belongs to the beta/gamma-crystallin family.

Crystallins are the dominant structural components of the vertebrate eye lens. The chain is Gamma-crystallin S (crygs) from Cyprinus carpio (Common carp).